A 354-amino-acid polypeptide reads, in one-letter code: Probable DNA repair protein RAD51 homolog 4 (354 aa).

Residue 115–122 (GNTSCGKT) participates in ATP binding.

Belongs to the RecA family. RAD51 subfamily.

The protein resides in the nucleus. Functionally, involved in the homologous recombination repair (HRR) pathway of double-stranded DNA breaks arising during DNA replication or induced by DNA-damaging agents. This is Probable DNA repair protein RAD51 homolog 4 (rad51d) from Dictyostelium discoideum (Social amoeba).